We begin with the raw amino-acid sequence, 798 residues long: MNISYNWLQEFCEIPYTAQELGEKLTSVGIAVEKVTYIGNYEKVVVGEVLEVENLPGTELFKTKVSTGKEIFEVVTGAKNVFAGFKYPFALPGAKLPNGITIEERRIRGVVSQGMLLSAEELGLLERKGAEPGLMLLPPEAPVGEKIEKVLELDDYLLELDLTPNRGDCLSVLGVAREVAALTGHRLKLAEPELPLDNGSCPVSIEIQNPELCGRYMGIVIKNVKVGPSPLWLEQRLRKAGIRPINNIVDVTNYILLEYGQPLHAFDLDKLASPEIIVRNARAGEKITTLDGVERELTSEMLVIADREKPIAVAGIMGGQNTEVDDDTKTVFIEAAWFNPVSVRKTARKLGLRTDASQRFEKNVDIEGIKRALIKAALMICELAGGTIQGRYGDVYPKKFTPKVIAVSLSRAEEFLGISLDAKRVVEILESLGFRVTIGEKKIFVEVPSYRPDVSLEADIYEEIARYLGYNNFPDTMPIGITTTGFSPEYNFEYKVKNLLTALGMQEIITYSFINPDSYNKLGLSVDEVLTKSVVLLNPLSIEQSVMRTTLLPGLLDIAKRNENRQQENLLLFEMGNVFEKNGEDLPKETKLIGGIALGYRYGDWYNKPRKYDFYYVKGILESLFTSLGINNFSFSAAKDLPFLHPGKAARVYLENTEIGYLGELHPLVQKKYEFKNTPLVFELNYDLLKTLIPAEKKYTPLSPYPEVKRDIALLVEREIPAATFIEVIKGLAINTLKNIEIFDVYEGEKLGPNKKSIAISLTFSSTEKTLSEEEINNFMAQVLKALEAKTGAKLRTF.

The tRNA-binding domain occupies 38 to 148 (IGNYEKVVVG…PEAPVGEKIE (111 aa)). The region spanning 400-475 (FTPKVIAVSL…RYLGYNNFPD (76 aa)) is the B5 domain. Mg(2+)-binding residues include aspartate 453, aspartate 459, glutamate 462, and glutamate 463. The 94-residue stretch at 703–796 (SPYPEVKRDI…LEAKTGAKLR (94 aa)) folds into the FDX-ACB domain.

It belongs to the phenylalanyl-tRNA synthetase beta subunit family. Type 1 subfamily. Tetramer of two alpha and two beta subunits. Requires Mg(2+) as cofactor.

The protein resides in the cytoplasm. It catalyses the reaction tRNA(Phe) + L-phenylalanine + ATP = L-phenylalanyl-tRNA(Phe) + AMP + diphosphate + H(+). The sequence is that of Phenylalanine--tRNA ligase beta subunit from Carboxydothermus hydrogenoformans (strain ATCC BAA-161 / DSM 6008 / Z-2901).